The primary structure comprises 536 residues: Apolipoprotein N-acyltransferase (536 aa).

6 consecutive transmembrane segments (helical) span residues 34–54 (PLWW…RPGA), 64–84 (ALIG…WLFI), 89–109 (YGAL…AFLA), 129–149 (GAAL…GSLW), 172–192 (YVGV…CVQW), and 199–219 (HWPM…AAVQ). The 244-residue stretch at 244 to 487 (LQGNIAQDEK…RGVLRGQVHG (244 aa)) folds into the CN hydrolase domain. Glu-283 acts as the Proton acceptor in catalysis. Residue Lys-345 is part of the active site. The active-site Nucleophile is Cys-395. The helical transmembrane segment at 503–523 (WWVARWGLWPLWALAALALAW) threads the bilayer.

It belongs to the CN hydrolase family. Apolipoprotein N-acyltransferase subfamily.

It localises to the cell inner membrane. The catalysed reaction is N-terminal S-1,2-diacyl-sn-glyceryl-L-cysteinyl-[lipoprotein] + a glycerophospholipid = N-acyl-S-1,2-diacyl-sn-glyceryl-L-cysteinyl-[lipoprotein] + a 2-acyl-sn-glycero-3-phospholipid + H(+). The protein operates within protein modification; lipoprotein biosynthesis (N-acyl transfer). In terms of biological role, catalyzes the phospholipid dependent N-acylation of the N-terminal cysteine of apolipoprotein, the last step in lipoprotein maturation. This chain is Apolipoprotein N-acyltransferase, found in Verminephrobacter eiseniae (strain EF01-2).